The sequence spans 74 residues: DNA-directed RNA polymerase subunit omega (74 aa).

It belongs to the RNA polymerase subunit omega family. The RNAP catalytic core consists of 2 alpha, 1 beta/beta' and 1 omega subunit. When a sigma factor is associated with the core the holoenzyme is formed, which can initiate transcription.

It carries out the reaction RNA(n) + a ribonucleoside 5'-triphosphate = RNA(n+1) + diphosphate. Promotes RNA polymerase assembly. Latches the N- and C-terminal regions of the beta' subunit thereby facilitating its interaction with the beta and alpha subunits. In Helicobacter hepaticus (strain ATCC 51449 / 3B1), this protein is DNA-directed RNA polymerase subunit omega.